The following is a 501-amino-acid chain: MASQSKNSGLTNKVTTVVATNAFGADVMSEISYTDAKVVGNGSFGVVFQAKMVPSNEMVAIKKVLQDRRFKNRELQIMRKLRHDNIITLKWFFFSSGEKRDEVYLNLVMEFLPETLYKVERQYARAKQTLPVNFVRLYMYQLLRSMGYLHSLGFCHRDIKPQNMLLDSETGVLKLCDFGSAKQLISGEPNVSYICSRYYRAPELIFGSTDYTTKIDMWSAGCVMSELLLGQLIFPGDSGVDQIVEIVKVMGTPTSEQLHDMNPHYKQFKLPELKPHPWSKVFRIRTPAEAIDLVSKMLIYSPNARVSPLMGCAHPFFDELRQDPHQQLPNGRSLPPLFNFTDYEKTIEPDTMPLLLPRAQGSSTTKEPSAAHRNRNTAGEESPRKTEDSQKPATAALSKSPGPSGKALESPPGFLQHDLGNGDHVAVGTMPMEPLTLEQNHFAAESYAVGEDAEDNLEEDVGDENDYDYDDGGQCNSTYISDDMDEASESDDDDFEEEDEN.

In terms of domain architecture, Protein kinase spans 33-317; sequence YTDAKVVGNG…PLMGCAHPFF (285 aa). ATP is bound by residues 39-47 and lysine 62; that span reads VGNGSFGVV. Aspartate 158 acts as the Proton acceptor in catalysis. Tyrosine 193 carries the phosphotyrosine modification. 2 disordered regions span residues 355–427 and 446–501; these read LLPR…HVAV and SYAV…EDEN. Residues 381 to 390 are compositionally biased toward basic and acidic residues; sequence ESPRKTEDSQ. 2 stretches are compositionally biased toward acidic residues: residues 451–471 and 482–501; these read EDAEDNLEEDVGDENDYDYDD and DDMDEASESDDDDFEEEDEN.

Belongs to the protein kinase superfamily. CMGC Ser/Thr protein kinase family. GSK-3 subfamily. Phosphorylation on Tyr-193 is necessary for the activity.

It carries out the reaction L-seryl-[tau protein] + ATP = O-phospho-L-seryl-[tau protein] + ADP + H(+). It catalyses the reaction L-threonyl-[tau protein] + ATP = O-phospho-L-threonyl-[tau protein] + ADP + H(+). This chain is Putative glycogen synthase kinase-3 homolog (gskt), found in Drosophila melanogaster (Fruit fly).